The following is a 397-amino-acid chain: Probable transport protein MmpL6 (397 aa).

The next 5 helical transmembrane spans lie at 190–210 (YDLL…MMII), 214–234 (LVAA…SFGL), 242–262 (LLGI…LLAV), 293–313 (TGGV…SFVF), and 328–348 (LGLL…IAVL).

The protein belongs to the resistance-nodulation-cell division (RND) (TC 2.A.6) family. MmpL subfamily.

It is found in the cell membrane. This is Probable transport protein MmpL6 (mmpL6) from Mycobacterium tuberculosis (strain CDC 1551 / Oshkosh).